We begin with the raw amino-acid sequence, 244 residues long: Sensory transduction protein LytR (244 aa).

The Response regulatory domain maps to 2 to 118 (NILILDDEML…RVDKALAKVK (117 aa)). The residue at position 55 (aspartate 55) is a 4-aspartylphosphate. The HTH LytTR-type domain occupies 140 to 244 (LTLTLADRSI…MKELNAHLTL (105 aa)).

In terms of processing, phosphorylated by LytS.

It is found in the cytoplasm. Member of the two-component regulatory system LytR/LytS that probably regulates genes involved in cell wall metabolism. This is Sensory transduction protein LytR (lytR) from Streptococcus mutans serotype c (strain ATCC 700610 / UA159).